Here is a 148-residue protein sequence, read N- to C-terminus: uncharacterized protein (148 aa).

Helical transmembrane passes span 20–42, 52–74, and 118–135; these read YYSK…IANY, YFLM…VRCY, and IIRY…CTYI.

It localises to the cell membrane. This is an uncharacterized protein from Rickettsia prowazekii (strain Madrid E).